An 863-amino-acid polypeptide reads, in one-letter code: Phycobiliprotein ApcE (863 aa).

(2R,3E)-phycocyanobilin is bound at residue C178. 3 consecutive PBS-linker domains span residues 235–414, 473–652, and 671–852; these read DLQG…RFQK, PIEN…KLQP, and NNII…FILM.

This sequence belongs to the phycobilisome linker protein family. Post-translationally, contains one covalently linked bilin chromophore. This protein autochromophorylates (Potential).

The protein resides in the plastid. It localises to the chloroplast thylakoid membrane. Its function is as follows. This protein is postulated to act both as terminal energy acceptor and as a linker polypeptide that stabilizes the phycobilisome architecture. May have intrinsic bilin lyase activity. This chain is Phycobiliprotein ApcE (apcE), found in Galdieria sulphuraria (Red alga).